Consider the following 233-residue polypeptide: Large ribosomal subunit protein uL1 (233 aa).

The protein belongs to the universal ribosomal protein uL1 family. Part of the 50S ribosomal subunit.

In terms of biological role, binds directly to 23S rRNA. The L1 stalk is quite mobile in the ribosome, and is involved in E site tRNA release. Protein L1 is also a translational repressor protein, it controls the translation of the L11 operon by binding to its mRNA. This Proteus mirabilis (strain HI4320) protein is Large ribosomal subunit protein uL1.